Here is a 430-residue protein sequence, read N- to C-terminus: Serine--tRNA ligase (430 aa).

Residue 231 to 233 (TSE) participates in L-serine binding. 262–264 (RSE) provides a ligand contact to ATP. Glu285 is an L-serine binding site. 349–352 (EISS) lines the ATP pocket. Ser385 contributes to the L-serine binding site.

The protein belongs to the class-II aminoacyl-tRNA synthetase family. Type-1 seryl-tRNA synthetase subfamily. In terms of assembly, homodimer. The tRNA molecule binds across the dimer.

The protein resides in the cytoplasm. It carries out the reaction tRNA(Ser) + L-serine + ATP = L-seryl-tRNA(Ser) + AMP + diphosphate + H(+). The enzyme catalyses tRNA(Sec) + L-serine + ATP = L-seryl-tRNA(Sec) + AMP + diphosphate + H(+). It functions in the pathway aminoacyl-tRNA biosynthesis; selenocysteinyl-tRNA(Sec) biosynthesis; L-seryl-tRNA(Sec) from L-serine and tRNA(Sec): step 1/1. Functionally, catalyzes the attachment of serine to tRNA(Ser). Is also able to aminoacylate tRNA(Sec) with serine, to form the misacylated tRNA L-seryl-tRNA(Sec), which will be further converted into selenocysteinyl-tRNA(Sec). The protein is Serine--tRNA ligase of Roseobacter denitrificans (strain ATCC 33942 / OCh 114) (Erythrobacter sp. (strain OCh 114)).